The following is a 175-amino-acid chain: Translation initiation factor IF-3 (175 aa).

It belongs to the IF-3 family. Monomer.

It localises to the cytoplasm. Its function is as follows. IF-3 binds to the 30S ribosomal subunit and shifts the equilibrium between 70S ribosomes and their 50S and 30S subunits in favor of the free subunits, thus enhancing the availability of 30S subunits on which protein synthesis initiation begins. In Staphylococcus aureus (strain USA300), this protein is Translation initiation factor IF-3.